The following is a 364-amino-acid chain: tRNA/tmRNA (uracil-C(5))-methyltransferase (364 aa).

The S-adenosyl-L-methionine site is built by Q188, Y216, N221, E237, and D297. The active-site Nucleophile is C322. E356 (proton acceptor) is an active-site residue.

The protein belongs to the class I-like SAM-binding methyltransferase superfamily. RNA M5U methyltransferase family. TrmA subfamily.

The catalysed reaction is uridine(54) in tRNA + S-adenosyl-L-methionine = 5-methyluridine(54) in tRNA + S-adenosyl-L-homocysteine + H(+). The enzyme catalyses uridine(341) in tmRNA + S-adenosyl-L-methionine = 5-methyluridine(341) in tmRNA + S-adenosyl-L-homocysteine + H(+). Dual-specificity methyltransferase that catalyzes the formation of 5-methyluridine at position 54 (m5U54) in all tRNAs, and that of position 341 (m5U341) in tmRNA (transfer-mRNA). The sequence is that of tRNA/tmRNA (uracil-C(5))-methyltransferase from Teredinibacter turnerae (strain ATCC 39867 / T7901).